Here is a 306-residue protein sequence, read N- to C-terminus: Methionyl-tRNA formyltransferase (306 aa).

108-111 is a binding site for (6S)-5,6,7,8-tetrahydrofolate; it reads SLLP.

The protein belongs to the Fmt family.

It catalyses the reaction L-methionyl-tRNA(fMet) + (6R)-10-formyltetrahydrofolate = N-formyl-L-methionyl-tRNA(fMet) + (6S)-5,6,7,8-tetrahydrofolate + H(+). Its function is as follows. Attaches a formyl group to the free amino group of methionyl-tRNA(fMet). The formyl group appears to play a dual role in the initiator identity of N-formylmethionyl-tRNA by promoting its recognition by IF2 and preventing the misappropriation of this tRNA by the elongation apparatus. This Paenarthrobacter aurescens (strain TC1) protein is Methionyl-tRNA formyltransferase.